Here is a 271-residue protein sequence, read N- to C-terminus: Phosphatidylglycerol--prolipoprotein diacylglyceryl transferase (271 aa).

The next 4 helical transmembrane spans lie at 25–45 (WYGIMYVIALLLALLLAKFFV), 60–80 (YFIWVEIGVILGARLGYILIY), 103–123 (FVGIRGMSYHGAIIGFLIATL), and 131–151 (ANPWIFLDLVALSVPLAYVFG). Residue Arg152 coordinates a 1,2-diacyl-sn-glycero-3-phospho-(1'-sn-glycerol). 3 consecutive transmembrane segments (helical) span residues 181–201 (PSQLYEAFLEGIVVFIIVYLA), 209–229 (GELILVYAGAYSLARFICEFY), and 235–255 (GIGFVLWGMSMGQILSFIMFI).

This sequence belongs to the Lgt family.

It localises to the cell inner membrane. It carries out the reaction L-cysteinyl-[prolipoprotein] + a 1,2-diacyl-sn-glycero-3-phospho-(1'-sn-glycerol) = an S-1,2-diacyl-sn-glyceryl-L-cysteinyl-[prolipoprotein] + sn-glycerol 1-phosphate + H(+). It participates in protein modification; lipoprotein biosynthesis (diacylglyceryl transfer). In terms of biological role, catalyzes the transfer of the diacylglyceryl group from phosphatidylglycerol to the sulfhydryl group of the N-terminal cysteine of a prolipoprotein, the first step in the formation of mature lipoproteins. The chain is Phosphatidylglycerol--prolipoprotein diacylglyceryl transferase from Campylobacter jejuni (strain RM1221).